We begin with the raw amino-acid sequence, 101 residues long: NADH-quinone oxidoreductase subunit K (101 aa).

The next 3 membrane-spanning stretches (helical) occupy residues Leu4–Leu24, Ile29–Ala49, and Ile61–Leu81.

It belongs to the complex I subunit 4L family. As to quaternary structure, NDH-1 is composed of 14 different subunits. Subunits NuoA, H, J, K, L, M, N constitute the membrane sector of the complex.

The protein localises to the cell inner membrane. The enzyme catalyses a quinone + NADH + 5 H(+)(in) = a quinol + NAD(+) + 4 H(+)(out). Its function is as follows. NDH-1 shuttles electrons from NADH, via FMN and iron-sulfur (Fe-S) centers, to quinones in the respiratory chain. The immediate electron acceptor for the enzyme in this species is believed to be ubiquinone. Couples the redox reaction to proton translocation (for every two electrons transferred, four hydrogen ions are translocated across the cytoplasmic membrane), and thus conserves the redox energy in a proton gradient. This Burkholderia vietnamiensis (strain G4 / LMG 22486) (Burkholderia cepacia (strain R1808)) protein is NADH-quinone oxidoreductase subunit K.